The sequence spans 554 residues: Valerianol synthase TPS1C (554 aa).

2 residues coordinate Mg(2+): D307 and D311. The short motif at V326–D330 is the DDXXD motif element. Residues D452, S456, and E460 each coordinate Mg(2+).

This sequence belongs to the terpene synthase family. Requires Mg(2+) as cofactor.

The enzyme catalyses (2E,6E)-farnesyl diphosphate + H2O = valerianol + diphosphate. It functions in the pathway secondary metabolite biosynthesis; terpenoid biosynthesis. Terpene synthase that catalyzes the biosynthesis of the terpene valerianol, which is a volatile compound of floral scent. The protein is Valerianol synthase TPS1C of Camellia hiemalis (Camellia).